Reading from the N-terminus, the 156-residue chain is Ribonuclease H (156 aa).

In terms of domain architecture, RNase H type-1 spans 3 to 144 (ERKLIHIFTD…CDILARSAAE (142 aa)). Mg(2+) contacts are provided by aspartate 12, glutamate 50, aspartate 72, and aspartate 136.

It belongs to the RNase H family. As to quaternary structure, monomer. It depends on Mg(2+) as a cofactor.

The protein localises to the cytoplasm. The enzyme catalyses Endonucleolytic cleavage to 5'-phosphomonoester.. Functionally, endonuclease that specifically degrades the RNA of RNA-DNA hybrids. The polypeptide is Ribonuclease H (Shewanella putrefaciens (strain CN-32 / ATCC BAA-453)).